A 76-amino-acid polypeptide reads, in one-letter code: Large ribosomal subunit protein uL29 (76 aa).

Belongs to the universal ribosomal protein uL29 family.

The protein is Large ribosomal subunit protein uL29 of Gloeothece citriformis (strain PCC 7424) (Cyanothece sp. (strain PCC 7424)).